The following is a 148-amino-acid chain: MTITQVKIKKLENFSGSLPEYATEHSAGMDLIAANEQPITIKAAAIQLIPTGIAIALPDSFEAQIRPRSGLAVKHGITVANSPGTIDADYRGEIKVILINLGKEDFIIEKGMRIAQMIIAKYERILWEESSSLMETMRGSGGFGSTGV.

Substrate-binding positions include 68–70 (RSG), N81, 85–87 (TID), and K95.

This sequence belongs to the dUTPase family. Mg(2+) is required as a cofactor.

The enzyme catalyses dUTP + H2O = dUMP + diphosphate + H(+). The protein operates within pyrimidine metabolism; dUMP biosynthesis; dUMP from dCTP (dUTP route): step 2/2. In terms of biological role, this enzyme is involved in nucleotide metabolism: it produces dUMP, the immediate precursor of thymidine nucleotides and it decreases the intracellular concentration of dUTP so that uracil cannot be incorporated into DNA. This chain is Deoxyuridine 5'-triphosphate nucleotidohydrolase, found in Rickettsia conorii (strain ATCC VR-613 / Malish 7).